The chain runs to 408 residues: Peptidase T (408 aa).

His-78 is a binding site for Zn(2+). Asp-80 is a catalytic residue. Zn(2+) is bound at residue Asp-140. The active-site Proton acceptor is Glu-173. Zn(2+) is bound by residues Glu-174, Asp-196, and His-379.

The protein belongs to the peptidase M20B family. It depends on Zn(2+) as a cofactor.

The protein resides in the cytoplasm. The enzyme catalyses Release of the N-terminal residue from a tripeptide.. Its function is as follows. Cleaves the N-terminal amino acid of tripeptides. The polypeptide is Peptidase T (Escherichia coli (strain UTI89 / UPEC)).